A 659-amino-acid polypeptide reads, in one-letter code: Delta(6)-protoilludene synthase (659 aa).

Residues Asp91, Asn227, Ser231, and Glu235 each contribute to the Mg(2+) site. The DDXXD motif motif lies at 91-95; it reads DEHTD. Residues Arg316 and Tyr317 each coordinate (2E,6E)-farnesyl diphosphate. The disordered stretch occupies residues 528–586; the sequence is PQFSKTSGAPNGAHTPTTTNGSIKSNGFVSGDTNGHANGNGHVQTRSSTPSSSSSSTSS. The span at 530 to 573 shows a compositional bias: polar residues; that stretch reads FSKTSGAPNGAHTPTTTNGSIKSNGFVSGDTNGHANGNGHVQTR. Residues 574–586 are compositionally biased toward low complexity; the sequence is SSTPSSSSSSTSS.

The protein belongs to the terpene synthase family. It depends on Mg(2+) as a cofactor.

The enzyme catalyses (2E,6E)-farnesyl diphosphate = Delta(6)-protoilludene + diphosphate. Its function is as follows. Terpene cyclase that catalyzes the cyclization of farnesyl diphosphate (FPP) to delta(6)-protoilludene. The polypeptide is Delta(6)-protoilludene synthase (Cyclocybe aegerita (Black poplar mushroom)).